The chain runs to 201 residues: Small ribosomal subunit protein uS2 (201 aa).

This sequence belongs to the universal ribosomal protein uS2 family. In terms of assembly, part of the 50S ribosomal subunit.

This chain is Small ribosomal subunit protein uS2, found in Thermococcus kodakarensis (strain ATCC BAA-918 / JCM 12380 / KOD1) (Pyrococcus kodakaraensis (strain KOD1)).